A 798-amino-acid chain; its full sequence is Penicillin-binding protein 1A (798 aa).

Over 1–9 (MIKKIMTTC) the chain is Cytoplasmic. Residues 10–30 (FGLVFGLCVFAVGLLAIAILA) form a helical; Signal-anchor for type II membrane protein membrane-spanning segment. At 31–798 (TYPKLPSLDS…SKRQQLDSLF (768 aa)) the chain is on the periplasmic side. The tract at residues 50–218 (LTVYSADGKI…SAYNPIVNPE (169 aa)) is transglycosylase. The active-site Proton donor; for transglycosylase activity is the glutamate 88. The segment at 378 to 700 (RRALGFAARA…GTIAVPVWVD (323 aa)) is transpeptidase. Serine 461 acts as the Acyl-ester intermediate; for transpeptidase activity in catalysis. The segment at 739–798 (LMLDNGGAAPQPSRRVKEDDGGAAEGGRQEADDESRQDMQETPVLPSNTDSKRQQLDSLF) is disordered. Composition is skewed to basic and acidic residues over residues 765-777 (GRQE…RQDM) and 788-798 (DSKRQQLDSLF).

The protein in the N-terminal section; belongs to the glycosyltransferase 51 family. In the C-terminal section; belongs to the transpeptidase family.

It is found in the cell inner membrane. The catalysed reaction is [GlcNAc-(1-&gt;4)-Mur2Ac(oyl-L-Ala-gamma-D-Glu-L-Lys-D-Ala-D-Ala)](n)-di-trans,octa-cis-undecaprenyl diphosphate + beta-D-GlcNAc-(1-&gt;4)-Mur2Ac(oyl-L-Ala-gamma-D-Glu-L-Lys-D-Ala-D-Ala)-di-trans,octa-cis-undecaprenyl diphosphate = [GlcNAc-(1-&gt;4)-Mur2Ac(oyl-L-Ala-gamma-D-Glu-L-Lys-D-Ala-D-Ala)](n+1)-di-trans,octa-cis-undecaprenyl diphosphate + di-trans,octa-cis-undecaprenyl diphosphate + H(+). It catalyses the reaction Preferential cleavage: (Ac)2-L-Lys-D-Ala-|-D-Ala. Also transpeptidation of peptidyl-alanyl moieties that are N-acyl substituents of D-alanine.. Its pathway is cell wall biogenesis; peptidoglycan biosynthesis. Cell wall formation. Synthesis of cross-linked peptidoglycan from the lipid intermediates. The enzyme has a penicillin-insensitive transglycosylase N-terminal domain (formation of linear glycan strands) and a penicillin-sensitive transpeptidase C-terminal domain (cross-linking of the peptide subunits). The protein is Penicillin-binding protein 1A (mrcA) of Neisseria lactamica.